A 225-amino-acid polypeptide reads, in one-letter code: MSTFKSLSLSALLFIAFLFTCARGATFNIINNCPFTVWAAAVPGGGKRLDRGQNWIINPGAGTKGARVWARTGCNFDGAGRGKCQTGDCNGLLQCQAFGQPPNTLAEYALNQFNNLDFFDISLVDGFNVAMEFSPTSGGCTRGIKCTANINEQCPNELRAPGGCNNPCTVFKTDQYCCNSGNCGPTDYSRFFKTRCPDAYSYPKDDQTSTFTCPGGTNYKVVFCP.

The signal sequence occupies residues 1-24; that stretch reads MSTFKSLSLSALLFIAFLFTCARG. 8 cysteine pairs are disulfide-bonded: Cys-33-Cys-224, Cys-74-Cys-84, Cys-89-Cys-95, Cys-140-Cys-213, Cys-146-Cys-196, Cys-154-Cys-164, Cys-168-Cys-177, and Cys-178-Cys-183.

This sequence belongs to the thaumatin family. Post-translationally, N-glycosylated.

Its subcellular location is the secreted. Has antifungal activity against B.cinerea, C.comatus, M.arachidicola, P.piricola, C.albicans and S.carlsbergensis. Inhibits HIV-1 reverse transcriptase. In Actinidia chinensis var. chinensis (Chinese soft-hair kiwi), this protein is Thaumatin-like protein.